A 392-amino-acid polypeptide reads, in one-letter code: L-rhamnonate dehydratase (392 aa).

Residues His22 and Arg48 each coordinate substrate. Mg(2+) contacts are provided by Asp214, Glu240, and Glu268. His318 (proton acceptor) is an active-site residue. Glu338 contributes to the substrate binding site.

It belongs to the mandelate racemase/muconate lactonizing enzyme family. RhamD subfamily. In terms of assembly, homooctamer; tetramer of dimers. It depends on Mg(2+) as a cofactor.

It catalyses the reaction L-rhamnonate = 2-dehydro-3-deoxy-L-rhamnonate + H2O. Its function is as follows. Catalyzes the dehydration of L-rhamnonate to 2-keto-3-deoxy-L-rhamnonate (KDR). This Burkholderia cenocepacia (strain HI2424) protein is L-rhamnonate dehydratase.